Reading from the N-terminus, the 1099-residue chain is SLIT-ROBO Rho GTPase-activating protein 3 (1099 aa).

Residues alanine 19–aspartate 314 form the F-BAR domain. The stretch at glutamine 352–threonine 392 forms a coiled coil. Positions glycine 470–proline 493 are disordered. Residues glycine 506–phenylalanine 694 form the Rho-GAP domain. The SH3 domain occupies valine 744–methionine 803. Positions aspartate 809–serine 820 are enriched in polar residues. Positions aspartate 809 to glycine 846 are disordered. Residues serine 817, serine 820, serine 821, serine 837, and serine 858 each carry the phosphoserine modification. A disordered region spans residues alanine 861–lysine 911. Residues histidine 952 to alanine 987 are a coiled coil. Position 954 is a phosphoserine (serine 954). 2 disordered regions span residues threonine 994–histidine 1014 and alanine 1045–methionine 1099. The span at valine 1060 to serine 1074 shows a compositional bias: low complexity. The segment covering proline 1089 to methionine 1099 has biased composition (polar residues).

In terms of assembly, homodimer. Forms a heterooligomer with SRGAP1 and SRGAP2 through its F-BAR domain. Interacts with WASF1. Probably interacts with ROBO1. Interacts with FASLG.

Its function is as follows. GTPase-activating protein for RAC1 and perhaps CDC42, but not for RhoA small GTPase. May attenuate RAC1 signaling in neurons. This chain is SLIT-ROBO Rho GTPase-activating protein 3 (Srgap3), found in Mus musculus (Mouse).